The following is a 386-amino-acid chain: 3-hydroxyisobutyryl-CoA hydrolase, mitochondrial (386 aa).

The N-terminal 32 residues, 1–32 (MGQREMWRLMSRFNAFKRTNTILHHLRMSKHT), are a transit peptide targeting the mitochondrion. 2 positions are modified to N6-acetyllysine; alternate: Lys-55 and Lys-92. Residues Lys-55 and Lys-92 each carry the N6-succinyllysine; alternate modification. Substrate is bound by residues Glu-121, Gly-146, Glu-169, and Asp-177. Lys-221 is modified (N6-acetyllysine; alternate). Lys-221 carries the N6-succinyllysine; alternate modification. The residue at position 234 (Ser-234) is a Phosphoserine. Lys-257 is modified (N6-succinyllysine). Lys-297 is modified (N6-acetyllysine; alternate). N6-succinyllysine; alternate is present on Lys-297. N6-succinyllysine is present on Lys-301. Position 353 is an N6-acetyllysine; alternate (Lys-353). At Lys-353 the chain carries N6-succinyllysine; alternate. Ser-356 carries the phosphoserine modification. Lys-360 and Lys-365 each carry N6-acetyllysine. At Lys-377 the chain carries N6-succinyllysine.

This sequence belongs to the enoyl-CoA hydratase/isomerase family. Highly expressed in liver and kidney, also detected in heart, muscle and brain (at protein level). Not detected in lung.

Its subcellular location is the mitochondrion. It carries out the reaction 3-hydroxy-2-methylpropanoyl-CoA + H2O = 3-hydroxy-2-methylpropanoate + CoA + H(+). It participates in amino-acid degradation; L-valine degradation. Functionally, hydrolyzes 3-hydroxyisobutyryl-CoA (HIBYL-CoA), a saline catabolite. Has high activity toward isobutyryl-CoA. Could be an isobutyryl-CoA dehydrogenase that functions in valine catabolism. Also hydrolyzes 3-hydroxypropanoyl-CoA. In Homo sapiens (Human), this protein is 3-hydroxyisobutyryl-CoA hydrolase, mitochondrial (HIBCH).